A 69-amino-acid polypeptide reads, in one-letter code: DNA-directed RNA polymerase subunit omega (69 aa).

It belongs to the RNA polymerase subunit omega family. In terms of assembly, the RNAP catalytic core consists of 2 alpha, 1 beta, 1 beta' and 1 omega subunit. When a sigma factor is associated with the core the holoenzyme is formed, which can initiate transcription.

The enzyme catalyses RNA(n) + a ribonucleoside 5'-triphosphate = RNA(n+1) + diphosphate. Its function is as follows. Promotes RNA polymerase assembly. Latches the N- and C-terminal regions of the beta' subunit thereby facilitating its interaction with the beta and alpha subunits. This Geobacter metallireducens (strain ATCC 53774 / DSM 7210 / GS-15) protein is DNA-directed RNA polymerase subunit omega.